The chain runs to 160 residues: Prostaglandin E synthase 3 (160 aa).

The region spanning 1 to 90 (MQPASAKWYD…ESGQSWPRLT (90 aa)) is the CS domain. Lys-33 carries the post-translational modification N6-acetyllysine. Residue Lys-35 forms a Glycyl lysine isopeptide (Lys-Gly) (interchain with G-Cter in SUMO2) linkage. The residue at position 44 (Ser-44) is a Phosphoserine. Lys-65 participates in a covalent cross-link: Glycyl lysine isopeptide (Lys-Gly) (interchain with G-Cter in SUMO2). 6 positions are modified to phosphoserine: Ser-85, Ser-100, Ser-113, Ser-118, Ser-148, and Ser-151. Positions 124-160 (SEMMNNMGGDEDVDLPEVDGADDDSQDSDDEKMPDLE) are disordered. Acidic residues predominate over residues 132–153 (GDEDVDLPEVDGADDDSQDSDD). The PXLE motif motif lies at 157-160 (PDLE).

It belongs to the p23/wos2 family. Probably forms a complex composed of chaperones HSP90 and HSP70, co-chaperones STIP1/HOP, CDC37, PPP5C, PTGES3/p23, TSC1 and client protein TSC2. Binds to the progesterone receptor. Interacts with TERT; the interaction, together with HSP90AA1, is required for correct assembly and stabilization of the telomerase holoenzyme complex. Interacts (via PXLE motif) with EGLN1/PHD2, recruiting EGLN1/PHD2 to the HSP90 pathway to facilitate HIF alpha proteins hydroxylation. Interacts with HSP90AA1, FLCN, FNIP1 and FNIP2. Post-translationally, proteolytically cleaved by caspase-7 (CASP7) in response to apoptosis, leading to its inactivation. Detected in testis and ovary, at lower levels in endometrium, myometrium, kidney and lung, and only faintly in spleen, heart and muscle (at protein level). Expressed at high levels in glandular and luminal epithelial cells of the endometrium, but also detected in stromal cells (at protein level).

It is found in the cytoplasm. It carries out the reaction prostaglandin H2 = prostaglandin E2. Its pathway is lipid metabolism; prostaglandin biosynthesis. Its function is as follows. Cytosolic prostaglandin synthase that catalyzes the oxidoreduction of prostaglandin endoperoxide H2 (PGH2) to prostaglandin E2 (PGE2). Molecular chaperone that localizes to genomic response elements in a hormone-dependent manner and disrupts receptor-mediated transcriptional activation, by promoting disassembly of transcriptional regulatory complexes. Facilitates HIF alpha proteins hydroxylation via interaction with EGLN1/PHD2, leading to recruit EGLN1/PHD2 to the HSP90 pathway. The chain is Prostaglandin E synthase 3 (PTGES3) from Bos taurus (Bovine).